A 177-amino-acid polypeptide reads, in one-letter code: Adenine phosphoribosyltransferase (177 aa).

It belongs to the purine/pyrimidine phosphoribosyltransferase family. In terms of assembly, homodimer.

The protein localises to the cytoplasm. It catalyses the reaction AMP + diphosphate = 5-phospho-alpha-D-ribose 1-diphosphate + adenine. It functions in the pathway purine metabolism; AMP biosynthesis via salvage pathway; AMP from adenine: step 1/1. Functionally, catalyzes a salvage reaction resulting in the formation of AMP, that is energically less costly than de novo synthesis. The chain is Adenine phosphoribosyltransferase from Chlorobaculum parvum (strain DSM 263 / NCIMB 8327) (Chlorobium vibrioforme subsp. thiosulfatophilum).